The following is a 673-amino-acid chain: MKAIVFAYHDIGCVGLEALALAGYEIQAVFTHSDAPGENHFYASVAKTAAGMDVPVFAPEDINHPLWVNRIRELAPDVIFSFYYRTILSDDILQLPSFGAFNLHGSLLPRYRGRAPVNWVLVNGETQTGVTLHKMVSRADAGDIVAQSVVAIDDEDTALTLHGKCRTAAATLLAQQLPLIRSREIALTPQDDSQASYFGRRTAADGLIDWQKSAHEINNLIRAVTEPYPGAFTFLGERKVIIWRARVVKNNRVNVNHPHGGDAGSIISTSPLVVSCGEDALEIVSGQSEAGLYMSGSRLAAEMGMVPQARLGNLASRVQRRRTRVLILGVNGFIGNHLTERLLRDDRYEIYGLDISSDAIARFLGDPRFHFVEGDISIHNEWIEYHIKKCDVILPLVAIATPIEYTRNPLRVFELDFEENLKIVRDCVRYNKRIVFPSTSEVYGMCDDKEFDEDTSRLIVGPINKQRWIYSVSKQLLDRVIWAYGAKNGLRFTLFRPFNWMGPRLDTLDAARIGSSRAITQLILNLVEGSPIKLVDGGAQKRCFTDIHDGIEALFRVIENRNGQCDGQIINIGNPHNEASIRELGEMLLTSFNAHPLRDRFPPFAGFIDVESSSYYGKGYQDVAHRTPSIRNAKRLLEWEPTVKMEQTVAETLDYFLRTVDVPHTADATDTQG.

A formyltransferase ArnAFT region spans residues 1–311 (MKAIVFAYHD…EMGMVPQARL (311 aa)). H104 acts as the Proton donor; for formyltransferase activity in catalysis. Residues R114 and 136-140 (VSRAD) contribute to the (6R)-10-formyltetrahydrofolate site. The segment at 321 to 673 (RRTRVLILGV…HTADATDTQG (353 aa)) is dehydrogenase ArnADH. NAD(+) is bound by residues D354 and 375–376 (DI). UDP-alpha-D-glucuronate-binding positions include A400, Y405, and 439–440 (TS). Residue E441 is the Proton acceptor; for decarboxylase activity of the active site. UDP-alpha-D-glucuronate contacts are provided by residues R467, N499, 533 to 542 (KLVDGGAQKR), and Y620. R626 acts as the Proton donor; for decarboxylase activity in catalysis.

In the N-terminal section; belongs to the Fmt family. UDP-L-Ara4N formyltransferase subfamily. It in the C-terminal section; belongs to the NAD(P)-dependent epimerase/dehydratase family. UDP-glucuronic acid decarboxylase subfamily. Homohexamer, formed by a dimer of trimers.

The catalysed reaction is UDP-alpha-D-glucuronate + NAD(+) = UDP-beta-L-threo-pentopyranos-4-ulose + CO2 + NADH. It catalyses the reaction UDP-4-amino-4-deoxy-beta-L-arabinose + (6R)-10-formyltetrahydrofolate = UDP-4-deoxy-4-formamido-beta-L-arabinose + (6S)-5,6,7,8-tetrahydrofolate + H(+). It functions in the pathway nucleotide-sugar biosynthesis; UDP-4-deoxy-4-formamido-beta-L-arabinose biosynthesis; UDP-4-deoxy-4-formamido-beta-L-arabinose from UDP-alpha-D-glucuronate: step 1/3. Its pathway is nucleotide-sugar biosynthesis; UDP-4-deoxy-4-formamido-beta-L-arabinose biosynthesis; UDP-4-deoxy-4-formamido-beta-L-arabinose from UDP-alpha-D-glucuronate: step 3/3. The protein operates within bacterial outer membrane biogenesis; lipopolysaccharide biosynthesis. In terms of biological role, bifunctional enzyme that catalyzes the oxidative decarboxylation of UDP-glucuronic acid (UDP-GlcUA) to UDP-4-keto-arabinose (UDP-Ara4O) and the addition of a formyl group to UDP-4-amino-4-deoxy-L-arabinose (UDP-L-Ara4N) to form UDP-L-4-formamido-arabinose (UDP-L-Ara4FN). The modified arabinose is attached to lipid A and is required for resistance to polymyxin and cationic antimicrobial peptides. The protein is Bifunctional polymyxin resistance protein ArnA of Pectobacterium atrosepticum (strain SCRI 1043 / ATCC BAA-672) (Erwinia carotovora subsp. atroseptica).